A 200-amino-acid chain; its full sequence is 3-isopropylmalate dehydratase small subunit (200 aa).

The protein belongs to the LeuD family. LeuD type 1 subfamily. Heterodimer of LeuC and LeuD.

It catalyses the reaction (2R,3S)-3-isopropylmalate = (2S)-2-isopropylmalate. Its pathway is amino-acid biosynthesis; L-leucine biosynthesis; L-leucine from 3-methyl-2-oxobutanoate: step 2/4. Its function is as follows. Catalyzes the isomerization between 2-isopropylmalate and 3-isopropylmalate, via the formation of 2-isopropylmaleate. This chain is 3-isopropylmalate dehydratase small subunit, found in Arthrobacter sp. (strain FB24).